Here is a 383-residue protein sequence, read N- to C-terminus: MPAATMATPGYLACRTSVATLLFFVLLRRAAILGAGGAPSPARIVDYLIGYTRVGDMDKLYSQYADRYLDVTLHGCERAVVDPLGDMRHVLASEGASGQEFTASVIWYYVFPDVCFAPVFRREYLRCIRPRKLEDCYTTSPFMWTREFYVDAFLAGSGTGIELLGLNKKLTGTYMLVVRVGTTTRTALVTVNVVGECPTTMEEVTTTLRGNCWRGRQYTTDFNGDGMYLFDTEEEHRRIVYKAYQDKLKVASPNATDAPISYPRAYTGADERLAPYTLQPVSTDDHYLPGCPWGIGCDLDQTSASGVIEIEDHDESDVRLVSYPPPTLPSPGPGGNENGAGYSDNRPDPKVVGPTVGPGAIILVVMCAPILIGLTAFTIRKYC.

The signal sequence occupies residues Met-1–Ala-30. Residues Ala-31–Pro-358 are Virion surface-facing. Disulfide bonds link Cys-76–Cys-197, Cys-115–Cys-212, and Cys-127–Cys-136. The tract at residues Tyr-244–Glu-311 is profusion. The disordered stretch occupies residues Glu-315–Pro-349. Residues Tyr-323–Gly-332 are compositionally biased toward pro residues. The chain crosses the membrane as a helical span at residues Gly-359–Ile-379. Over Arg-380–Cys-383 the chain is Intravirion.

The protein belongs to the herpesviridae glycoprotein D family.

The protein resides in the virion membrane. Its function is as follows. Envelope glycoprotein that binds to host cell entry receptors, promoting the virus entry into host cells. May trigger fusion with host membrane, by recruiting the fusion machinery composed of gB and gH/gL. In Amazona oratrix (yellow-headed parrot), this protein is Envelope glycoprotein D (US6).